A 23-amino-acid polypeptide reads, in one-letter code: Basic phospholipase A2 homolog Vur-S49 analog (23 aa).

The tract at residues 1-23 is disordered; sequence SVLEIGLMLQEETEKNPKTSYSI.

Contains 7 disulfide bonds. As to expression, expressed by the venom gland.

The protein localises to the secreted. The sequence is that of Basic phospholipase A2 homolog Vur-S49 analog from Vipera renardi (Steppe viper).